A 216-amino-acid polypeptide reads, in one-letter code: DNA-directed RNA polymerase subunit alpha (216 aa).

The protein belongs to the RNA polymerase alpha chain family. In plastids the minimal PEP RNA polymerase catalytic core is composed of four subunits: alpha, beta, beta', and beta''. When a (nuclear-encoded) sigma factor is associated with the core the holoenzyme is formed, which can initiate transcription.

It is found in the plastid. It localises to the chloroplast. The enzyme catalyses RNA(n) + a ribonucleoside 5'-triphosphate = RNA(n+1) + diphosphate. In terms of biological role, DNA-dependent RNA polymerase catalyzes the transcription of DNA into RNA using the four ribonucleoside triphosphates as substrates. This Euglena granulata protein is DNA-directed RNA polymerase subunit alpha (rpoA).